The chain runs to 209 residues: Orotate phosphoribosyltransferase (209 aa).

Residues arginine 96, lysine 100, histidine 102, and 122–130 each bind 5-phospho-alpha-D-ribose 1-diphosphate; that span reads EDLISTGGS. Position 126 (serine 126) interacts with orotate.

It belongs to the purine/pyrimidine phosphoribosyltransferase family. PyrE subfamily. As to quaternary structure, homodimer. Requires Mg(2+) as cofactor.

It catalyses the reaction orotidine 5'-phosphate + diphosphate = orotate + 5-phospho-alpha-D-ribose 1-diphosphate. Its pathway is pyrimidine metabolism; UMP biosynthesis via de novo pathway; UMP from orotate: step 1/2. Catalyzes the transfer of a ribosyl phosphate group from 5-phosphoribose 1-diphosphate to orotate, leading to the formation of orotidine monophosphate (OMP). In Streptococcus gordonii (strain Challis / ATCC 35105 / BCRC 15272 / CH1 / DL1 / V288), this protein is Orotate phosphoribosyltransferase.